Here is a 137-residue protein sequence, read N- to C-terminus: MMVKQEIVQTGRAQELRCQGYDALKRTSYEFTKHAQPLPNGGFLLCNLEACSYSIQGCGFSPTFALESSEGSVDWRETLILSPKPKLFFLLCREGGPAVHLLSVSSYGDRCKSGEARLRTWHLSCSRCGVALLPSGA.

The polypeptide is Putative FERT-1 protein (FERT-1) (Ascaris suum (Pig roundworm)).